The following is a 439-amino-acid chain: Glutamate-1-semialdehyde 2,1-aminomutase (439 aa).

K273 carries the post-translational modification N6-(pyridoxal phosphate)lysine.

Belongs to the class-III pyridoxal-phosphate-dependent aminotransferase family. HemL subfamily. Homodimer. Pyridoxal 5'-phosphate is required as a cofactor.

It localises to the cytoplasm. The enzyme catalyses (S)-4-amino-5-oxopentanoate = 5-aminolevulinate. Its pathway is porphyrin-containing compound metabolism; protoporphyrin-IX biosynthesis; 5-aminolevulinate from L-glutamyl-tRNA(Glu): step 2/2. This is Glutamate-1-semialdehyde 2,1-aminomutase from Paenarthrobacter aurescens (strain TC1).